The sequence spans 311 residues: MSFASDVKKELTGLEVHREHAKAELAALIRMNGSLSLVNQQFVLNVQTENAAIARRMYSLLKDHYHAQAELLVRKKMKLKKNNVYIVRLKQDTQKILADLDIMDGVVFNGNVSNEIMGNAQKMRSYLRGAFMASGSVNNPETSRYHLEIFSIYEEHNNDICKMLNYYDLNARTLGRRNGYICYLKGAEKIADFLTLIGATNSMLKFEDVRIVRDMRNSVNRLVNCETANLNKTIDAASKQIENIQFIESTVGLTSLPEKLQEIAELRLEYPEVSLKELGEMIPSGAISKSGINHRIRKINEFAEKLREKSA.

A DNA-binding region (H-T-H motif) is located at residues 274–308 (SLKELGEMIPSGAISKSGINHRIRKINEFAEKLRE).

It belongs to the WhiA family.

Its function is as follows. Involved in cell division and chromosome segregation. The protein is Probable cell division protein WhiA of Enterococcus faecalis (strain ATCC 700802 / V583).